A 292-amino-acid chain; its full sequence is Probable E3 ubiquitin-protein ligase RNF144A (292 aa).

Residues 16–236 (PLVSCKLCLG…YDKGPCRNKL (221 aa)) form a TRIAD supradomain region. Zn(2+) is bound by residues C20, C23, C43, C46, C111, C116, C135, C138, C143, C146, H151, C156, C185, and C188. Residues 20–70 (CKLCLGEYTVEQMTTIAQCQCIFCTLCLKQYVELLIKEGLETAISCPDASC) form an RING-type 1 zinc finger. The segment at 91–156 (QKYKKLQFEK…KANWHPGQGC (66 aa)) adopts an IBR-type zinc-finger fold. The RING-type 2; atypical zinc-finger motif lies at 185-214 (CPKCKVYIERDEGCAQMMCKNCKHAFCWYC). C198 is an active-site residue. Zn(2+)-binding residues include C203, C206, C211, C214, H226, and C232. Residues 250 to 270 (VVGIFAGFGLLLLVASPFLLL) form a helical membrane-spanning segment.

This sequence belongs to the RBR family. RNF144 subfamily.

Its subcellular location is the membrane. The catalysed reaction is [E2 ubiquitin-conjugating enzyme]-S-ubiquitinyl-L-cysteine + [acceptor protein]-L-lysine = [E2 ubiquitin-conjugating enzyme]-L-cysteine + [acceptor protein]-N(6)-ubiquitinyl-L-lysine.. It functions in the pathway protein modification; protein ubiquitination. E3 ubiquitin-protein ligase which accepts ubiquitin from E2 ubiquitin-conjugating enzymes ube2l3 and ube2l6 in the form of a thioester and then directly transfers the ubiquitin to targeted substrates. The sequence is that of Probable E3 ubiquitin-protein ligase RNF144A (rnf144a) from Xenopus tropicalis (Western clawed frog).